A 346-amino-acid polypeptide reads, in one-letter code: tRNA N6-adenosine threonylcarbamoyltransferase (346 aa).

Residues H111 and H115 each coordinate Fe cation. Residues 134 to 138 (LVSGG), D167, G180, and N279 contribute to the substrate site. Residue D307 coordinates Fe cation.

It belongs to the KAE1 / TsaD family. Fe(2+) serves as cofactor.

It localises to the cytoplasm. It carries out the reaction L-threonylcarbamoyladenylate + adenosine(37) in tRNA = N(6)-L-threonylcarbamoyladenosine(37) in tRNA + AMP + H(+). In terms of biological role, required for the formation of a threonylcarbamoyl group on adenosine at position 37 (t(6)A37) in tRNAs that read codons beginning with adenine. Is involved in the transfer of the threonylcarbamoyl moiety of threonylcarbamoyl-AMP (TC-AMP) to the N6 group of A37, together with TsaE and TsaB. TsaD likely plays a direct catalytic role in this reaction. In Burkholderia pseudomallei (strain 1106a), this protein is tRNA N6-adenosine threonylcarbamoyltransferase.